A 535-amino-acid chain; its full sequence is CTP synthase (535 aa).

Positions 1–266 (MKTKFIFITG…DEQVVEKLNI (266 aa)) are amidoligase domain. Serine 14 contacts CTP. Serine 14 is a UTP binding site. Residues 15 to 20 (SIGKGL) and aspartate 72 contribute to the ATP site. Residues aspartate 72 and glutamate 140 each contribute to the Mg(2+) site. CTP contacts are provided by residues 147 to 149 (DIE), 187 to 192 (KTKPTQ), and lysine 223. UTP contacts are provided by residues 187-192 (KTKPTQ) and lysine 223. The Glutamine amidotransferase type-1 domain maps to 292 to 534 (RIAIVGKYVN…IGASLTHRNQ (243 aa)). Position 354 (glycine 354) interacts with L-glutamine. Cysteine 381 acts as the Nucleophile; for glutamine hydrolysis in catalysis. Residues 382–385 (LGMQ), glutamate 405, and arginine 462 each bind L-glutamine. Active-site residues include histidine 507 and glutamate 509.

It belongs to the CTP synthase family. Homotetramer.

The enzyme catalyses UTP + L-glutamine + ATP + H2O = CTP + L-glutamate + ADP + phosphate + 2 H(+). The catalysed reaction is L-glutamine + H2O = L-glutamate + NH4(+). It catalyses the reaction UTP + NH4(+) + ATP = CTP + ADP + phosphate + 2 H(+). The protein operates within pyrimidine metabolism; CTP biosynthesis via de novo pathway; CTP from UDP: step 2/2. With respect to regulation, allosterically activated by GTP, when glutamine is the substrate; GTP has no effect on the reaction when ammonia is the substrate. The allosteric effector GTP functions by stabilizing the protein conformation that binds the tetrahedral intermediate(s) formed during glutamine hydrolysis. Inhibited by the product CTP, via allosteric rather than competitive inhibition. In terms of biological role, catalyzes the ATP-dependent amination of UTP to CTP with either L-glutamine or ammonia as the source of nitrogen. Regulates intracellular CTP levels through interactions with the four ribonucleotide triphosphates. The sequence is that of CTP synthase from Trichlorobacter lovleyi (strain ATCC BAA-1151 / DSM 17278 / SZ) (Geobacter lovleyi).